Reading from the N-terminus, the 437-residue chain is GTPase Der (437 aa).

EngA-type G domains follow at residues 3–167 (NIVA…TKKV) and 176–352 (PAIA…DIRQ). GTP-binding positions include 9–16 (GRPNVGKS), 56–60 (DTGGW), 119–122 (NKAD), 182–189 (GKPNVGKS), 229–233 (DTAGI), and 294–297 (NKWD). The region spanning 353–437 (IKIPTSQLNR…TPINIFMREK (85 aa)) is the KH-like domain.

Belongs to the TRAFAC class TrmE-Era-EngA-EngB-Septin-like GTPase superfamily. EngA (Der) GTPase family. Associates with the 50S ribosomal subunit.

Functionally, GTPase that plays an essential role in the late steps of ribosome biogenesis. The sequence is that of GTPase Der from Azobacteroides pseudotrichonymphae genomovar. CFP2.